The primary structure comprises 773 residues: Pentatricopeptide repeat-containing protein At1g76280 (773 aa).

11 PPR repeats span residues 130-165, 166-200, 201-231, 235-269, 332-369, 370-400, 402-436, 524-558, 559-593, 594-628, and 629-663; these read DSRS…RISP, LLPI…RVGK, NGIT…YVNH, DILS…ALRG, LRWS…NLKP, YDST…ISEC, YSYP…KLRP, GTPT…GCPA, DVAT…GFSP, KAVT…EIHL, and DVLS…KVNP.

This sequence belongs to the PPR family. P subfamily.

This chain is Pentatricopeptide repeat-containing protein At1g76280, found in Arabidopsis thaliana (Mouse-ear cress).